The sequence spans 23 residues: Hemocyanin subunit 4 (23 aa).

This sequence belongs to the tyrosinase family. Hemocyanin subfamily. In terms of tissue distribution, hemolymph.

The protein resides in the secreted. The protein localises to the extracellular space. In terms of biological role, hemocyanins are copper-containing oxygen carriers occurring freely dissolved in the hemolymph of many mollusks and arthropods. The protein is Hemocyanin subunit 4 of Carcinus maenas (Common shore crab).